A 559-amino-acid chain; its full sequence is MENQKVPISSVPNLKELSRPIANFPPSIWGDRFINYTCEDENEQAQKERQVEELKEQVRRELAATVDKPLQQLNIIDATQRLGIAYHFENEIEESLEHIYLHTYVKNNCFQGSHDLYSVALWFRLLRQDGYKVSCDVFDNFRDYEGNFKNSLMEDAKGLLELYEATHLSVHGEEMLDDALEFAKTRLESIVNHLNYPLAEQVRHALYRPLRKGLPRLEAVYFFRIYEAYHSHNKALLKLAKLDFNLLQSLHRKELGDMARWWRSLDFATKFPFARDRLVEGYFWILGVYFEPQYSLAREITTKVFAMISTIDDIYDAYGTLDELKLFTEAIQRWDVGSLDQLPEYMKPCYKSILDVYNEIEEEMANQGSLFRMHYAKEVMKTIVEGYMDEAKWCHEKYVPTFQEYMSLALVTSGYTFLTTISYLGMGGIASKEAFEWLFSHPPIIEASESICRLMDDMSSHKFEQERGHVASGIECYMKQYGVIEEEAHDEFHKRLVKAWKDINEGFLRPYAVPEPLLMRILNLTRVMDVIYKNEDSYTHVKKAMKDNIASLLIDPMIV.

Residues Asp-312, Asp-316, and Glu-464 each coordinate Mg(2+). Residues 312–316 (DDIYD) carry the DDXXD motif motif.

This sequence belongs to the terpene synthase family. Tpsa subfamily. Mg(2+) serves as cofactor. The cofactor is Mn(2+).

Catalyzes alpha-humulene and delta-cadinene, as well as beta-elemene, the thermal rearrangement product of germacrene A and several other bicyclic sesquiterpenes when incubated with (2E,6E)-farnesyl diphosphate. In Santalum austrocaledonicum (Sandalwood), this protein is Sesquiterpene synthase.